The sequence spans 2313 residues: Protein Ycf2 (2313 aa).

Position 1606–1613 (1606–1613) interacts with ATP; it reads GSMETGRS.

This sequence belongs to the Ycf2 family.

The protein localises to the plastid. It localises to the chloroplast stroma. Its function is as follows. Probable ATPase of unknown function. Its presence in a non-photosynthetic plant (Epifagus virginiana) and experiments in tobacco indicate that it has an essential function which is probably not related to photosynthesis. The polypeptide is Protein Ycf2 (Psilotum nudum (Whisk fern)).